The primary structure comprises 253 residues: Chromosome-partitioning ATPase Soj (253 aa).

ATP is bound by residues Lys-11, Gly-12, Gly-13, Val-14, Gly-15, Lys-16, Thr-17, Thr-18, Pro-211, and Asn-213. Thr-17 is a binding site for Mg(2+).

This sequence belongs to the ParA family.

The enzyme catalyses ATP + H2O = ADP + phosphate + H(+). Functionally, ATPase probably involved in chromosome partitioning. Cooperatively binds dsDNA, forming nucleoprotein filaments in a strictly ATP-dependent fashion. The polypeptide is Chromosome-partitioning ATPase Soj (Treponema pallidum (strain Nichols)).